The following is a 518-amino-acid chain: MISWGLSCLSVLGAAGTTLLCAGLLLGLAQQLWTLRWTLSRDWASTLPLPKGSMGWPFFGETLHWLVQGSRFHSSRRERYGTVFKTHLLGRPVIRVSGAENVRTILLGEHRLVRSQWPQSAHILLGSHTLLGAVGEPHRQRRKVLARVFSRSSLEQFVPRLQGALRREVRSWCAAQRPVAVYQAAKALTFRMAARILLGLQLDEARCTELAHTFEQLVENLFSLPLDVPFSGLRKGIRARDQLYEHLDEAVAEKLQEKQTAEPGDALLLIINSARELGHEPSVQELKELAVELLFAAFFTTASASTSLILLLLQHPAAITKIQQELSAQGLGRACTCTPRASGSPPDCGCEPDLSLAMLGRLRYVDCVVKEVLRLLPPVSGGYRTALRTFELDGYQIPKGWSVMYSIRDTHETAAVYRSPPEGFDPERFGVESGDARGSGGRFHYIPFGGGARSCLGQELAQAVLQLLAVELVRTARWELATPAFPVMQTVPIVHPVDGLLLFFHPLPTSGAGDGLPF.

The helical transmembrane segment at 293 to 313 (LLFAAFFTTASASTSLILLLL) threads the bilayer. Residue cysteine 455 participates in heme binding.

Belongs to the cytochrome P450 family. The cofactor is heme.

The protein resides in the membrane. It catalyses the reaction an organic molecule + reduced [NADPH--hemoprotein reductase] + O2 = an alcohol + oxidized [NADPH--hemoprotein reductase] + H2O + H(+). The catalysed reaction is all-trans-retinoate + reduced [NADPH--hemoprotein reductase] + O2 = all-trans-4-hydroxyretinoate + oxidized [NADPH--hemoprotein reductase] + H2O + H(+). It carries out the reaction all-trans-4-hydroxyretinoate + reduced [NADPH--hemoprotein reductase] + O2 = all-trans-4-oxoretinoate + oxidized [NADPH--hemoprotein reductase] + 2 H2O + H(+). The enzyme catalyses 9-cis-retinoate + reduced [NADPH--hemoprotein reductase] + O2 = 9-cis-4-hydroxyretinoate + oxidized [NADPH--hemoprotein reductase] + H2O + H(+). It catalyses the reaction 9-cis-4-hydroxyretinoate + reduced [NADPH--hemoprotein reductase] + O2 = 9-cis-4-oxoretinoate + oxidized [NADPH--hemoprotein reductase] + 2 H2O + H(+). The catalysed reaction is all-trans-4-hydroxy-13,14-dihydroretinoate + reduced [NADPH--hemoprotein reductase] + O2 = all-trans-4-oxo-13,14-dihydroretinoate + oxidized [NADPH--hemoprotein reductase] + 2 H2O + H(+). It carries out the reaction all-trans-13,14-dihydroretinoate + reduced [NADPH--hemoprotein reductase] + O2 = all-trans-4-hydroxy-13,14-dihydroretinoate + oxidized [NADPH--hemoprotein reductase] + H2O + H(+). A cytochrome P450 monooxygenase involved in the metabolism of retinoates (RAs), the active metabolites of vitamin A, and critical signaling molecules in animals. RAs exist as at least four different isomers: all-trans-RA (atRA), 9-cis-RA, 13-cis-RA, and 9,13-dicis-RA, where atRA is considered to be the biologically active isomer, although 9-cis-RA and 13-cis-RA also have activity. Catalyzes the oxidation of atRA primarily at C-4. Oxidation of atRA limits its biological activity and initiates a degradative process leading to its eventual elimination, thereby contributes to the regulation of atRA homeostasis and signaling. Able to metabolize other RAs such as 9-cis with high efficiency. Can oxidize all-trans-13,14-dihydroretinoate (DRA) to metabolites which could include all-trans-4-oxo-DRA, all-trans-4-hydroxy-DRA, all-trans-5,8-epoxy-DRA, and all-trans-18-hydroxy-DRA. Shares sequence similarity with other CYP26 family members, but has higher affinity to 9-cis-RA and is much less sensitive to the inhibitory effects of ketoconazole. In cooperation with Cyp26a1, contributes to the CNS patterning and the development of regions of higher visual acuity. The polypeptide is Cytochrome P450 26C1 (Mus musculus (Mouse)).